Here is a 734-residue protein sequence, read N- to C-terminus: MALRFPRFSQGLAQDPTTRRIWFGIATAHDFESHDDITEEGLYQNIFASHFGQLAIIFLWTSGNLFHVAWQGNFESWVQDPLHVRPIAHAIWDPHFGQPAVEAFTRGGALGPVNIAYSGLYQWWYTIGLRTNEDLYTGALFLLFLSAISLIAGWLHLQPKWKPSVSWFKNAESRLNHHLSGLFGVSSLAWTGHLVHVAIPGSRGEYVRWNNFLDVLPSPQGLGPLFTGQWNLYAQNPDSSGHLFGTSQGAGTAILTLLGGFHPQTQSLWLTDIAHHHLAIAFVFLVAGHMYRTNFGIGHSIKDLLEAHTPPGGRLGRAHKGLYDTINNSIHFQLGLALASLGVITSLVAQHMYSLPPYAFIAQDFTTQAALYTHHQYIAGFIMTGAFAHGAIFFIRDYNPEQNEDNVLARMLDHKEAIKSHLSWASLFLGFHTLGLYVHNDVMLAFGTPEKQILIEPIFAQWIQSAHGKTSYGFDVLLSSTNGPAFNAGRSLWLPGWLNAINENGNSLFLTIGPGDFLVHHAIALGLHTTTLILVKGALDARGSKFMPDKKDFGYSFPCDGPGRGGTCDISAWDAFYLAVFWMLNTIGWVTFYWHWKHITLWQGNPSQFNESSTYLMGWLRDYLWLNSSQLINGYNPFGTNSLSVWAWMFLFGHLVWATGFMFLISWRGYWQELIETLAWAHERTPLANLIRWRDKPVALSIVQARLVGLAHFSVGYIFTYAAFLIASTSGKFG.

8 helical membrane-spanning segments follow: residues 46-69, 135-158, 175-199, 273-291, 330-353, 369-395, 417-439, and 517-535; these read IFAS…FHVA, LYTG…LHLQ, LNHH…HVAI, IAHH…GHMY, IHFQ…QHMY, AALY…IFFI, AIKS…LYVH, and FLVH…LILV. The [4Fe-4S] cluster site is built by Cys-559 and Cys-568. The next 2 helical transmembrane spans lie at 575-596 and 643-665; these read AFYL…YWHW and LSVW…MFLI. Chlorophyll a contacts are provided by His-654, Met-662, and Tyr-670. Residue Trp-671 participates in phylloquinone binding. A helical transmembrane segment spans residues 707–727; sequence LVGLAHFSVGYIFTYAAFLIA.

The protein belongs to the PsaA/PsaB family. The PsaA/B heterodimer binds the P700 chlorophyll special pair and subsequent electron acceptors. PSI consists of a core antenna complex that captures photons, and an electron transfer chain that converts photonic excitation into a charge separation. The eukaryotic PSI reaction center is composed of at least 11 subunits. P700 is a chlorophyll a/chlorophyll a' dimer, A0 is one or more chlorophyll a, A1 is one or both phylloquinones and FX is a shared 4Fe-4S iron-sulfur center. is required as a cofactor.

It is found in the plastid. It localises to the chloroplast thylakoid membrane. The catalysed reaction is reduced [plastocyanin] + hnu + oxidized [2Fe-2S]-[ferredoxin] = oxidized [plastocyanin] + reduced [2Fe-2S]-[ferredoxin]. Functionally, psaA and PsaB bind P700, the primary electron donor of photosystem I (PSI), as well as the electron acceptors A0, A1 and FX. PSI is a plastocyanin-ferredoxin oxidoreductase, converting photonic excitation into a charge separation, which transfers an electron from the donor P700 chlorophyll pair to the spectroscopically characterized acceptors A0, A1, FX, FA and FB in turn. Oxidized P700 is reduced on the lumenal side of the thylakoid membrane by plastocyanin. The polypeptide is Photosystem I P700 chlorophyll a apoprotein A2 (Amborella trichopoda).